The following is a 284-amino-acid chain: 4-hydroxybenzoate octaprenyltransferase (284 aa).

Transmembrane regions (helical) follow at residues 19 to 39, 42 to 62, 85 to 105, 107 to 127, 134 to 154, 165 to 185, 211 to 231, 233 to 253, and 261 to 281; these read IPIL…SHGL, ISYL…GCII, GQLS…VAFI, VLFL…LAIL, FFAI…FMAF, AWIF…IYAL, ILLF…YCDF, SFFY…YFLY, and CINA…IAVI.

The protein belongs to the UbiA prenyltransferase family. Mg(2+) serves as cofactor.

It is found in the cell inner membrane. The enzyme catalyses all-trans-octaprenyl diphosphate + 4-hydroxybenzoate = 4-hydroxy-3-(all-trans-octaprenyl)benzoate + diphosphate. Its pathway is cofactor biosynthesis; ubiquinone biosynthesis. Functionally, catalyzes the prenylation of para-hydroxybenzoate (PHB) with an all-trans polyprenyl group. Mediates the second step in the final reaction sequence of ubiquinone-8 (UQ-8) biosynthesis, which is the condensation of the polyisoprenoid side chain with PHB, generating the first membrane-bound Q intermediate 3-octaprenyl-4-hydroxybenzoate. This is 4-hydroxybenzoate octaprenyltransferase from Francisella tularensis subsp. holarctica (strain LVS).